We begin with the raw amino-acid sequence, 260 residues long: NAD-capped RNA hydrolase NudC (260 aa).

R69 is a binding site for substrate. Zn(2+) contacts are provided by C98 and C101. E111 lines the substrate pocket. The Zn(2+) site is built by C116 and C119. Y124 is a substrate binding site. A Nudix hydrolase domain is found at 125 to 248 (PQIAPCIIVA…TVARRLIEDT (124 aa)). 3 residues coordinate a divalent metal cation: A158, E174, and E178. Residues 159-180 (GFVEVGETLEQTVVREVMEESQ) carry the Nudix box motif. 192–199 (QPWPFPHS) serves as a coordination point for substrate. Residue E219 coordinates a divalent metal cation. Position 241 (A241) interacts with substrate.

The protein belongs to the Nudix hydrolase family. NudC subfamily. In terms of assembly, homodimer. The cofactor is Mg(2+). It depends on Mn(2+) as a cofactor. Zn(2+) serves as cofactor.

It catalyses the reaction a 5'-end NAD(+)-phospho-ribonucleoside in mRNA + H2O = a 5'-end phospho-adenosine-phospho-ribonucleoside in mRNA + beta-nicotinamide D-ribonucleotide + 2 H(+). The catalysed reaction is NAD(+) + H2O = beta-nicotinamide D-ribonucleotide + AMP + 2 H(+). The enzyme catalyses NADH + H2O = reduced beta-nicotinamide D-ribonucleotide + AMP + 2 H(+). In terms of biological role, mRNA decapping enzyme that specifically removes the nicotinamide adenine dinucleotide (NAD) cap from a subset of mRNAs by hydrolyzing the diphosphate linkage to produce nicotinamide mononucleotide (NMN) and 5' monophosphate mRNA. The NAD-cap is present at the 5'-end of some mRNAs and stabilizes RNA against 5'-processing. Has preference for mRNAs with a 5'-end purine. Catalyzes the hydrolysis of a broad range of dinucleotide pyrophosphates. In Pectobacterium carotovorum subsp. carotovorum (strain PC1), this protein is NAD-capped RNA hydrolase NudC.